Consider the following 554-residue polypeptide: Glucose-6-phosphate isomerase (554 aa).

The active-site Proton donor is E359. Catalysis depends on residues H390 and K518.

It belongs to the GPI family.

It localises to the cytoplasm. The enzyme catalyses alpha-D-glucose 6-phosphate = beta-D-fructose 6-phosphate. Its pathway is carbohydrate biosynthesis; gluconeogenesis. It participates in carbohydrate degradation; glycolysis; D-glyceraldehyde 3-phosphate and glycerone phosphate from D-glucose: step 2/4. Catalyzes the reversible isomerization of glucose-6-phosphate to fructose-6-phosphate. The chain is Glucose-6-phosphate isomerase from Pseudomonas putida (strain W619).